Here is a 957-residue protein sequence, read N- to C-terminus: Calsyntenin-3 (957 aa).

Residues 1-19 form the signal peptide; it reads MTLLLVSLLLASLLQISSG. The Cytoplasmic segment spans residues 1–21; that stretch reads MTLLLVSLLLASLLQISSGNK. The Extracellular portion of the chain corresponds to 20–848; that stretch reads NKANKHKPWI…SHRNSMVPSA (829 aa). Residues 22–42 constitute an intramembrane region (helical); sequence ANKHKPWIEAEYQGIVMENDN. 2 Cadherin domains span residues 29–145 and 146–246; these read IEAE…APVF and VERL…KPSW. Residues 43–73 are Cytoplasmic-facing; it reads TVLLNPPLFALDKDAPLRYAGEICGFRLHGS. Residues 74–94 constitute an intramembrane region (helical); sequence GVPFKAVILDKATGEGLIRAK. Over 95 to 139 the chain is Cytoplasmic; it reads EPVDCEAQKEHTFTTQAYDCVDGPDGANTKKSHKATVHVRVNDVN. Positions 140-160 form an intramembrane region, helical; sequence EFAPVFVERLYRAAVTEGKLY. The Cytoplasmic portion of the chain corresponds to 161–248; it reads DRILRVEAID…KPTCKPSWQG (88 aa). The helical transmembrane segment at 249–269 threads the bilayer; it reads WNKRIEYAPGAGSLALFPGIR. Topologically, residues 270-357 are lumenal; sequence LETCDEPLWN…GTQAVQVPLG (88 aa). N299, N327, N347, N508, and N741 each carry an N-linked (GlcNAc...) asparagine glycan. A helical transmembrane segment spans residues 849–869; it reads ATLIIVVCVGFLVLMVILGLV. The Cytoplasmic segment spans residues 870-957; the sequence is RIHSLHRRVS…RIIESPPHRY (88 aa). The interval 916–957 is disordered; it reads QQTGVAGVAGGQQEEEDSSDSEAADSPSSDERRIIESPPHRY. Positions 928–938 are enriched in acidic residues; it reads QEEEDSSDSEA. Residues 944 to 957 are compositionally biased toward basic and acidic residues; that stretch reads SDERRIIESPPHRY.

It belongs to the calsyntenin family. In terms of assembly, interacts (via cadherin domains) with both alpha and beta isoforms of neurexins (NRXN1, NRXN2 and NRXN3). Directly interacts with APBA2. Forms a tripartite complex with APBA2 and APP. Interacts with low affinity with KLC1. Interacts with SLC23A2/SVCT2. Interacts with CIDEA; inhibiting the lipid transferase activity of CIDEA. Interacts with CIDEC; inhibiting the lipid transferase activity of CIDEC. Post-translationally, proteolytically processed under normal cellular conditions. A primary zeta-cleavage generates a large extracellular (soluble) N-terminal domain (sAlc) and a short C-terminal transmembrane fragment (CTF1). A secondary cleavage catalyzed by gamma-secretase within the transmembrane domain releases the beta-Alc-beta chain in the extracellular milieu and produces an intracellular fragment (AlcICD). This processing is strongly suppressed in the tripartite complex formed with APBA2 and APP, which seems to prevent the association with gamma-secretase. Ubiquitinated: endoplasmic reticulum-localized protein is ubiquitinated and degraded by the endoplasmic reticulum-associated degradation (ERAD) pathway.

It is found in the postsynaptic cell membrane. The protein resides in the endoplasmic reticulum membrane. The protein localises to the golgi apparatus membrane. It localises to the cell projection. Its subcellular location is the dendrite. It is found in the lipid droplet. Postsynaptic adhesion molecule that binds to presynaptic neurexins to mediate both excitatory and inhibitory synapse formation. Promotes synapse development by acting as a cell adhesion molecule at the postsynaptic membrane, which associates with both neurexin-alpha and neurexin-beta proteins at the presynaptic membrane. Regulates the balance between excitatory and inhibitory synapses by inhibiting formation of excitatory parallel-fiber synapses and promoting formation of inhibitory synapses in the same neuron. May also be involved in ascorbate (vitamin C) uptake via its interaction with SLC23A2/SVCT2. Complex formation with APBA2 and APP, stabilizes APP metabolism and enhances APBA2-mediated suppression of beta-APP40 secretion, due to the retardation of intracellular APP maturation. Functionally, adipose-specific isoform that plays a key role in adaptive thermogenesis. Facilitates the efficient use of stored triglyceride by promoting multilocular morphology of thermogenic adipocytes: acts by inhibiting the activity of CIDEA and CIDEC on lipid droplets, thereby preventing lipid droplet fusion and facilitating lipid utilization. May also participate in adaptive thermogenesis by promoting sympathetic innervation of thermogenic adipose tissue: acts by driving secretion of neurotrophic factor S100B from brown adipocytes, stimulating neurite outgrowth from sympathetic neurons. This is Calsyntenin-3 from Rattus norvegicus (Rat).